Here is a 112-residue protein sequence, read N- to C-terminus: Integration host factor subunit alpha (112 aa).

This sequence belongs to the bacterial histone-like protein family. In terms of assembly, heterodimer of an alpha and a beta chain.

Its function is as follows. This protein is one of the two subunits of integration host factor, a specific DNA-binding protein that functions in genetic recombination as well as in transcriptional and translational control. This is Integration host factor subunit alpha from Rhizobium leguminosarum bv. trifolii (strain WSM2304).